We begin with the raw amino-acid sequence, 372 residues long: Stress-activated protein kinase JNK (372 aa).

The Protein kinase domain occupies 24–320 (YINLRPIGSG…VDEALKHEYI (297 aa)). Residues 31–36 (GSGAQG) and lysine 53 each bind ATP. Aspartate 149 acts as the Proton acceptor in catalysis. Position 181 is a phosphothreonine (threonine 181). The TXY signature appears at 181 to 183 (TPY). Residue tyrosine 183 is modified to Phosphotyrosine.

This sequence belongs to the protein kinase superfamily. CMGC Ser/Thr protein kinase family. MAP kinase subfamily. As to quaternary structure, interacts with MKP-4 (via tyrosine-protein phosphatase domain); the interaction dephosphorylates bsk. Requires Mg(2+) as cofactor. Dually phosphorylated on Thr-181 and Tyr-183, which activates the enzyme. As to expression, during gastrulation, expression is seen in cells undergoing morphogenetic movements. By stage 9 of embryonic development, expression is ubiquitous. At stages 12-14, expression occurs in epidermis and central nervous system. At stage 15, expression is restricted to ventral nerve cord, brain and some peripheral neurons. In larvae, expression is seen in all imaginal disks, with highest levels in wing and eye disks, and in the CNS. Adults express the protein in fat body and hemocytes.

Its subcellular location is the nucleus. The protein localises to the cytoplasm. It catalyses the reaction L-seryl-[protein] + ATP = O-phospho-L-seryl-[protein] + ADP + H(+). It carries out the reaction L-threonyl-[protein] + ATP = O-phospho-L-threonyl-[protein] + ADP + H(+). Activated by threonine and tyrosine phosphorylation by the dual specificity kinase, hep. Inhibited by dual specificity phosphatase, puckered. Its function is as follows. Mitogen-activated protein kinase and key component of the c-Jun N-terminal kinase (JNK) pathway which phosphorylate and activate transcription factors involved in a wide range of biological processes including response to various stresses, cellular proliferation, differentiation and migration, and regulation of cell shape. Responds to activation by environmental stress by phosphorylating a number of transcription factors, primarily components of AP-1 such as Jra and also the transcriptional repressor aop, and thus regulates transcriptional activity. Component of the immune response activated by bacterial infection, and is involved in wound healing and in dorsal closure, a morphogenetic movement during embryogenesis. Functions in the systematic response to wounding acting downstream of the Hayan-phenoloxidase PPO1 cascade. During epidermal wound healing involved in cellular polarization by inducing the translocation of sktl and mys/integrin beta to the trailing edge. Exhibits cytoprotective activity in neuronal cells in response to wounding to the integument. Controls the expression of a phosphatase, puckered, at the edges of wounded epidermal tissue and in the dorsal epithelium during dorsal closure. Regulates the activity of SREBP in neurons and thereby the accumulation of lipids in glia. Plays a role in positively regulating the expression of DIP2 independently of AP-1, thereby ensuring proper axon guidance in mushroom bodies. In enterocytes and differentiating progenitors of the gut that are experiencing inorganic phosphate (Pi) deficiency, activated by Cka to induce nearby progenitor cells to proliferate and form new absorptive cells, probably helping the organism to cope with the nutrient deficiency by maximizing absorption of dietary Pi. The polypeptide is Stress-activated protein kinase JNK (Drosophila melanogaster (Fruit fly)).